Consider the following 508-residue polypeptide: Photosystem II CP47 reaction center protein (508 aa).

6 consecutive transmembrane segments (helical) span residues 21-36, 101-115, 140-156, 203-218, 237-252, and 457-472; these read SVHIMHTALVAGWAGS, IVFSGLCFLAAIWHW, GIHLFLSGVACFGFGVF, IAAGTLGILAGLFHLS, VLSSSIAAVFFAAFVV, and SFALLFFFGHIWHGAR.

This sequence belongs to the PsbB/PsbC family. PsbB subfamily. In terms of assembly, PSII is composed of 1 copy each of membrane proteins PsbA, PsbB, PsbC, PsbD, PsbE, PsbF, PsbH, PsbI, PsbJ, PsbK, PsbL, PsbM, PsbT, PsbX, PsbY, PsbZ, Psb30/Ycf12, at least 3 peripheral proteins of the oxygen-evolving complex and a large number of cofactors. It forms dimeric complexes. It depends on Binds multiple chlorophylls. PSII binds additional chlorophylls, carotenoids and specific lipids. as a cofactor.

Its subcellular location is the plastid. The protein localises to the chloroplast thylakoid membrane. Its function is as follows. One of the components of the core complex of photosystem II (PSII). It binds chlorophyll and helps catalyze the primary light-induced photochemical processes of PSII. PSII is a light-driven water:plastoquinone oxidoreductase, using light energy to abstract electrons from H(2)O, generating O(2) and a proton gradient subsequently used for ATP formation. The polypeptide is Photosystem II CP47 reaction center protein (Jasminum nudiflorum (Winter jasmine)).